The following is an 87-amino-acid chain: Protein anon-73B1 (87 aa).

A helical membrane pass occupies residues 25-47; the sequence is LLIRYGLYVGALFQFVCISAAVL. The tract at residues 50-87 is disordered; sequence NNPDSQSNPETGEVTEREGEPVRTRLHKIRKLEKKKRR. Residues 63–72 are compositionally biased toward basic and acidic residues; that stretch reads VTEREGEPVR. Over residues 73-87 the composition is skewed to basic residues; that stretch reads TRLHKIRKLEKKKRR.

Belongs to the UPF0239 family.

It is found in the membrane. This is Protein anon-73B1 (anon-73B1) from Drosophila simulans (Fruit fly).